We begin with the raw amino-acid sequence, 370 residues long: UDP-N-acetylglucosamine--N-acetylmuramyl-(pentapeptide) pyrophosphoryl-undecaprenol N-acetylglucosamine transferase (370 aa).

UDP-N-acetyl-alpha-D-glucosamine-binding positions include 10–12 (TGG), N124, R166, S198, I252, and Q297.

The protein belongs to the glycosyltransferase 28 family. MurG subfamily.

The protein resides in the cell membrane. The catalysed reaction is di-trans,octa-cis-undecaprenyl diphospho-N-acetyl-alpha-D-muramoyl-L-alanyl-D-glutamyl-meso-2,6-diaminopimeloyl-D-alanyl-D-alanine + UDP-N-acetyl-alpha-D-glucosamine = di-trans,octa-cis-undecaprenyl diphospho-[N-acetyl-alpha-D-glucosaminyl-(1-&gt;4)]-N-acetyl-alpha-D-muramoyl-L-alanyl-D-glutamyl-meso-2,6-diaminopimeloyl-D-alanyl-D-alanine + UDP + H(+). Its pathway is cell wall biogenesis; peptidoglycan biosynthesis. In terms of biological role, cell wall formation. Catalyzes the transfer of a GlcNAc subunit on undecaprenyl-pyrophosphoryl-MurNAc-pentapeptide (lipid intermediate I) to form undecaprenyl-pyrophosphoryl-MurNAc-(pentapeptide)GlcNAc (lipid intermediate II). This chain is UDP-N-acetylglucosamine--N-acetylmuramyl-(pentapeptide) pyrophosphoryl-undecaprenol N-acetylglucosamine transferase, found in Finegoldia magna (strain ATCC 29328 / DSM 20472 / WAL 2508) (Peptostreptococcus magnus).